We begin with the raw amino-acid sequence, 406 residues long: Protein IWS1 homolog 2 (406 aa).

Disordered regions lie at residues 1 to 28 (MQEL…TGRR) and 41 to 89 (DEVE…SEEV). The segment covering 10–24 (EWVKELEGENEESKF) has biased composition (basic and acidic residues). The segment covering 41–56 (DEVEEDLDDFTEPADD) has biased composition (acidic residues). Basic and acidic residues predominate over residues 69–78 (KKDESGLEKT). Residues 201-284 (NLLKNWLEPL…NKWGRIIYNK (84 aa)) form the TFIIS N-terminal domain.

This sequence belongs to the IWS1 family.

It is found in the nucleus. Its function is as follows. Transcription factor involved in RNA polymerase II (RNAPII) transcription regulation. Involved in transcription elongation. May function at post-recruitment and elongation steps of transcription. This chain is Protein IWS1 homolog 2, found in Arabidopsis thaliana (Mouse-ear cress).